The following is a 431-amino-acid chain: tRNA-2-methylthio-N(6)-dimethylallyladenosine synthase (431 aa).

Positions 2–117 (KKLFIETLGC…ITEVVDKKHA (116 aa)) constitute an MTTase N-terminal domain. Cys-11, Cys-48, Cys-80, Cys-149, Cys-153, and Cys-156 together coordinate [4Fe-4S] cluster. One can recognise a Radical SAM core domain in the interval 135 to 368 (RTNPFKAMVN…QTRHTEILDE (234 aa)). Residues 371–431 (DAQLGKVHEV…SRGALDGVLV (61 aa)) form the TRAM domain.

The protein belongs to the methylthiotransferase family. MiaB subfamily. In terms of assembly, monomer. Requires [4Fe-4S] cluster as cofactor.

The protein resides in the cytoplasm. The enzyme catalyses N(6)-dimethylallyladenosine(37) in tRNA + (sulfur carrier)-SH + AH2 + 2 S-adenosyl-L-methionine = 2-methylsulfanyl-N(6)-dimethylallyladenosine(37) in tRNA + (sulfur carrier)-H + 5'-deoxyadenosine + L-methionine + A + S-adenosyl-L-homocysteine + 2 H(+). Catalyzes the methylthiolation of N6-(dimethylallyl)adenosine (i(6)A), leading to the formation of 2-methylthio-N6-(dimethylallyl)adenosine (ms(2)i(6)A) at position 37 in tRNAs that read codons beginning with uridine. This Sulfurovum sp. (strain NBC37-1) protein is tRNA-2-methylthio-N(6)-dimethylallyladenosine synthase.